A 297-amino-acid chain; its full sequence is Syntaxin-4 (297 aa).

A compositionally biased stretch (basic and acidic residues) spans 1–12 (MRDRTHELRQGD). The tract at residues 1–21 (MRDRTHELRQGDDSSDDEDKE) is disordered. The Cytoplasmic segment spans residues 1–275 (MRDRTHELRQ…QKKARKKKVF (275 aa)). Phosphoserine occurs at positions 14 and 15. Thr-31 is subject to Phosphothreonine. Ser-36, Ser-117, Ser-208, and Ser-248 each carry phosphoserine. A coiled-coil region spans residues 43 to 163 (QKVRTIRQTI…ERIRRQLKIT (121 aa)). The region spanning 200–262 (LNEISARHSE…ERGQEHVKVA (63 aa)) is the t-SNARE coiled-coil homology domain. The helical; Anchor for type IV membrane protein transmembrane segment at 276-296 (IAICLSITVLILVVIIVISTL) threads the bilayer. Val-297 is a topological domain (extracellular).

The protein belongs to the syntaxin family. In terms of assembly, component of the SNARE complex composed of STX4, SNAP23 and VAMP7 that interacts with SYT7 during lysosomal exocytosis. Found in a complex with VAMP8 and SNAP23. Detected in a complex with SNAP23 and STXBP4. Interacts with VAMP2. Interacts with SNAP23 and SNAPIN. Interacts with LLGL1. Interacts (via C-terminus) with CENPF. Interacts with DOC2B. Interacts with STXBP6. Interacts with STXBP3; excludes interaction with DOC2B and SNAP25. Interacts with STXBP4; excludes interaction with VAMP2. Interacts with STXBP5L.

It is found in the cell membrane. The protein resides in the cell projection. It localises to the neuron projection. The protein localises to the stereocilium. In terms of biological role, plasma membrane t-SNARE that mediates docking of transport vesicles. Necessary for the translocation of SLC2A4 from intracellular vesicles to the plasma membrane. In neurons, recruited at neurite tips to membrane domains rich in the phospholipid 1-oleoyl-2-palmitoyl-PC (OPPC) which promotes neurite tip surface expression of the dopamine transporter SLC6A3/DAT by facilitating fusion of SLC6A3-containing transport vesicles with the plasma membrane. Together with STXB3 and VAMP2, may also play a role in docking/fusion of intracellular GLUT4-containing vesicles with the cell surface in adipocytes and in docking of synaptic vesicles at presynaptic active zones. Required for normal hearing. The polypeptide is Syntaxin-4 (STX4) (Bos taurus (Bovine)).